The following is a 373-amino-acid chain: Malate dehydrogenase, mitochondrial (373 aa).

NAD(+) contacts are provided by residues 69–75 (GAAGGIG) and Asp-95. Arg-141 and Arg-147 together coordinate substrate. Residues Asn-154 and 177–179 (ISN) contribute to the NAD(+) site. The substrate site is built by Asn-179 and Arg-213. His-237 (proton acceptor) is an active-site residue. Met-288 serves as a coordination point for NAD(+).

This sequence belongs to the LDH/MDH superfamily. MDH type 1 family. As to quaternary structure, homodimer.

It is found in the mitochondrion matrix. It catalyses the reaction (S)-malate + NAD(+) = oxaloacetate + NADH + H(+). This Chlamydomonas reinhardtii (Chlamydomonas smithii) protein is Malate dehydrogenase, mitochondrial.